Consider the following 235-residue polypeptide: Probable ribosomal RNA small subunit methyltransferase A (235 aa).

S-adenosyl-L-methionine contacts are provided by His9, Leu11, Gly34, Glu55, Asp78, and Asn93.

This sequence belongs to the class I-like SAM-binding methyltransferase superfamily. rRNA adenine N(6)-methyltransferase family. RsmA subfamily.

The protein resides in the cytoplasm. In terms of biological role, specifically dimethylates two adjacent adenosines in the loop of a conserved hairpin near the 3'-end of 16S rRNA in the 30S particle. May play a critical role in biogenesis of 30S subunits. In Pyrobaculum islandicum (strain DSM 4184 / JCM 9189 / GEO3), this protein is Probable ribosomal RNA small subunit methyltransferase A.